The chain runs to 481 residues: Solute carrier family 46 member 2 (481 aa).

The Cytoplasmic portion of the chain corresponds to 1 to 37; the sequence is MGPEAAGPGRGAAPRLQVRTWIEPVVAATQVASSLYE. The chain crosses the membrane as a helical span at residues 38–58; the sequence is AGLLLVVKASFGAGAGAGAGA. Residues 59-83 are Extracellular-facing; it reads ASNHSAGPPRGAPEDQQQRAISNFY. N61 carries N-linked (GlcNAc...) asparagine glycosylation. The chain crosses the membrane as a helical span at residues 84 to 104; that stretch reads IVYNLVVGLTPLLSAYALGWL. Residues 105-113 are Cytoplasmic-facing; the sequence is SDRRHRKVA. The chain crosses the membrane as a helical span at residues 114–134; it reads ICVALLGFLLSRVGLLLKVLL. The Extracellular portion of the chain corresponds to 135–143; the sequence is DWPVEVLYG. Residues 144–164 traverse the membrane as a helical segment; sequence AAALNGLCGGFSAFWAGVMAL. Topologically, residues 165-179 are cytoplasmic; the sequence is GSLGSSEGRRSVRLV. A helical transmembrane segment spans residues 180-200; it reads LIDLILGLAGFCGSMASGHLF. The Extracellular portion of the chain corresponds to 201-210; it reads KQVAGHSGQG. Residues 211–231 traverse the membrane as a helical segment; the sequence is LVLTACSVSCATFALLYSLLV. Topologically, residues 232–286 are cytoplasmic; it reads LKVPEAAAGSGQALSAGDSVAGTVGTYRTLDPDHSDKQSVQGLHPPSPGKAKPRR. A disordered region spans residues 263–282; the sequence is PDHSDKQSVQGLHPPSPGKA. A helical transmembrane segment spans residues 287–307; that stretch reads TIIALLFLGAIVYDLAVVGTV. The Extracellular segment spans residues 308-326; the sequence is DVMPLFVLREPLSWNQVQV. A helical transmembrane segment spans residues 327–347; it reads GYGMAAGYTIFITSFLGVLVF. The Cytoplasmic segment spans residues 348–353; the sequence is SRCFQD. Residues 354-374 form a helical membrane-spanning segment; that stretch reads TTMIMIGMVSFGSGALLLAFV. Over 375–376 the chain is Extracellular; sequence KE. The helical transmembrane segment at 377 to 397 threads the bilayer; that stretch reads TYMFYIARAVMLFALIPITTI. The Cytoplasmic segment spans residues 398–412; it reads RSAMSKLIKGSSYGK. The chain crosses the membrane as a helical span at residues 413–433; sequence VFVILQLSLTLTGVVTSTVYN. The Extracellular portion of the chain corresponds to 434–446; the sequence is KIYQVTMEKFIGT. Residues 447 to 467 traverse the membrane as a helical segment; it reads CFALSSFLSFLAIIPIGIVAY. Residues 468 to 481 are Cytoplasmic-facing; the sequence is KQASWLQYGDVRET.

Belongs to the major facilitator superfamily. SLC46A family. In terms of processing, glycosylated. In terms of tissue distribution, highly expressed by the epididymal duct epithelium.

The protein resides in the endosome membrane. Its subcellular location is the cell membrane. It carries out the reaction N-acetyl-beta-D-glucosaminyl-(1-&gt;4)-1,6-anhydro-N-acetyl-beta-D-muramoyl-L-alanyl-gamma-D-glutamyl-meso-2,6-diaminopimeloyl-D-alanine(out) + n H(+)(out) = N-acetyl-beta-D-glucosaminyl-(1-&gt;4)-1,6-anhydro-N-acetyl-beta-D-muramoyl-L-alanyl-gamma-D-glutamyl-meso-2,6-diaminopimeloyl-D-alanine(in) + n H(+)(in). The enzyme catalyses L-alanyl-gamma-D-glutamyl-meso-2,6-diaminopimelate(out) + n H(+)(out) = L-alanyl-gamma-D-glutamyl-meso-2,6-diaminopimelate(in) + n H(+)(in). It catalyses the reaction N-acetyl-D-muramoyl-L-alanyl-D-isoglutamine(out) + n H(+)(out) = N-acetyl-D-muramoyl-L-alanyl-D-isoglutamine(in) + n H(+)(in). The catalysed reaction is 2',3'-cGAMP(out) + n H(+)(out) = 2',3'-cGAMP(in) + n H(+)(in). It carries out the reaction 3',3'-cGAMP(out) + n H(+)(out) = 3',3'-cGAMP(in) + n H(+)(in). Its function is as follows. Proton-coupled transporter that delivers pathogen-associated or danger-associated molecular patterns to cytosolic pattern recognition receptors as part of the innate immune response to microbes or tissue injury. Has selectivity toward muropeptides that contain the amino acid diaminopimelic acid (DAP-type peptidoglycan muropeptides) including Tri-DAP and tracheal toxin (TCT), common in Gram-negative bacteria and Gram-positive bacilli. In the context of immune recognition of skin microbiota, shuttles bacterial muropeptides across the endolysosomal membranes into the cytosol for recognition by NOD1, triggering MYD88-dependent secretion of IL1A and neutrophil recruitment in a pyroptosis-type inflammatory process. To a lesser extent and redundantly, transports muramyl dipeptides derived from most bacterial proteoglycans, eliciting NOD2 receptor activation and downstream inflammatory responses. Postulated to function as an importer of cyclic GMP-AMP dinucleotides (cGAMPs) in monocyte and macrophage cell lineages. Selectively imports cGAMPs derived from pathogenic bacteria such as 3'3'-cGAMP thus providing for differential immune recognition of pathogenic versus commensal bacteria. During tumorigenesis may transport extracellular tumor-derived 2'3'-cGAMP across the plasma membrane of M1-polarized macrophages to activate the anti-tumoral stimulator of interferon genes (STING) pathway. The transport mechanism, its electrogenicity and stoichiometry remain to be elucidated. This chain is Solute carrier family 46 member 2, found in Canis lupus familiaris (Dog).